The primary structure comprises 562 residues: Protein wntless (562 aa).

Residues 1-13 (MSGTILENLSGRK) are Cytoplasmic-facing. Residues 14 to 34 (LSILVATLLLCQVLCFLLGGL) form a helical membrane-spanning segment. Over 35–239 (YAPLPAGHVT…AIHQNGGFTQ (205 aa)) the chain is Lumenal. An N-linked (GlcNAc...) asparagine glycan is attached at N58. A helical membrane pass occupies residues 240 to 260 (IWLLLKTMLFPFVVGIMIWFW). At 261–270 (RRVHLLQRSP) the chain is on the cytoplasmic side. Residues 271–291 (ALLEYMLIYLGAALTFLNLPL) form a helical membrane-spanning segment. Residues 292–311 (EYLSLVYEMPYMLLLSDIRQ) lie on the Lumenal side of the membrane. Residues 312–332 (GIFYAMLLTFWLVFAGEHMLI) form a helical membrane-spanning segment. Residues 333–344 (QDAPNKSTIRSR) lie on the Cytoplasmic side of the membrane. The helical transmembrane segment at 345-365 (YWKHLSAVVVGCISLFVFDIC) threads the bilayer. Residues 366 to 390 (ERGVQLRNPFYSIWTTPLGAKVAMT) are Lumenal-facing. The chain crosses the membrane as a helical span at residues 391 to 411 (FIVLAGVSAAIYFLFLCYMIW). At 412-441 (KVFRNIGDKRTSLPSMSQARRLHYEGLIYR) the chain is on the cytoplasmic side. A helical transmembrane segment spans residues 442–462 (FKFLMLATLVCAALTVAGFIM). At 463–482 (GQMAEGQWDWNDNVAIQPTS) the chain is on the lumenal side. The chain crosses the membrane as a helical span at residues 483–503 (AFLTGVYGMWNIYIFALLILY). The Cytoplasmic portion of the chain corresponds to 504-562 (APSHKQWPAMHHSDETTQSNENIVASAASEEIEFSHLPSDSNPSEISSLTSFTRKVAFD).

Belongs to the wntless family. As to quaternary structure, interacts with wg; in the Golgi. Interacts with Vps35, a component of the retromer complex; wls stability is regulated by Vps35.

Its subcellular location is the presynaptic cell membrane. It localises to the postsynaptic cell membrane. It is found in the cell membrane. The protein resides in the endoplasmic reticulum membrane. The protein localises to the endosome membrane. Its subcellular location is the golgi apparatus membrane. A segment polarity gene required for wingless (wg)-dependent patterning processes, acting in both wg-sending cells and wg-target cells. In non-neuronal cells wls directs wg secretion. The wls traffic loop encompasses the Golgi, the cell surface, an endocytic compartment and a retrograde route leading back to the Golgi, and involves clathrin-mediated endocytosis and the retromer complex (a conserved protein complex consisting of Vps35 and Vps26). In neuronal cells (the larval motorneuron NMJ), the wg signal moves across the synapse via the release of wls-containing exosome-like vesicles. Postsynaptic wls is required for the trafficking of fz2 through the fz2-interacting protein Grip. This chain is Protein wntless, found in Drosophila sechellia (Fruit fly).